Reading from the N-terminus, the 484-residue chain is Cobyric acid synthase (484 aa).

The 188-residue stretch at 251–438 folds into the GATase cobBQ-type domain; that stretch reads ALKIAVPMLP…LHGLFGSDAY (188 aa). The Nucleophile role is filled by Cys-333. Residue His-430 is part of the active site.

It belongs to the CobB/CobQ family. CobQ subfamily.

It functions in the pathway cofactor biosynthesis; adenosylcobalamin biosynthesis. Functionally, catalyzes amidations at positions B, D, E, and G on adenosylcobyrinic A,C-diamide. NH(2) groups are provided by glutamine, and one molecule of ATP is hydrogenolyzed for each amidation. The sequence is that of Cobyric acid synthase from Rhizobium etli (strain ATCC 51251 / DSM 11541 / JCM 21823 / NBRC 15573 / CFN 42).